Reading from the N-terminus, the 367-residue chain is Mitogen-activated protein kinase 12 (367 aa).

Positions 27 to 311 (YQDLQPVGSG…AAEALTHPYF (285 aa)) constitute a Protein kinase domain. Residues 33–41 (VGSGAYGAV) and Lys-56 contribute to the ATP site. The active-site Proton acceptor is the Asp-153. Thr-183 bears the Phosphothreonine mark. A TXY motif is present at residues 183–185 (TGY). Phosphotyrosine is present on Tyr-185.

This sequence belongs to the protein kinase superfamily. CMGC Ser/Thr protein kinase family. MAP kinase subfamily. In terms of assembly, monomer. Interacts with the PDZ domain of the syntrophin SNTA1. Interacts with SH3BP5, LIN7C, SCRIB and SYNJ2BP. Interacts with PTPN4; this interaction induces the activation of PTPN4 phosphatase activity. It depends on Mg(2+) as a cofactor. In terms of processing, dually phosphorylated on Thr-183 and Tyr-185 by MAP2K3/MKK3 and MAP2K6/MKK6, which activates the enzyme. Post-translationally, ubiquitinated. Ubiquitination leads to degradation by the proteasome pathway. In terms of tissue distribution, highly expressed in skeletal muscle. Also expressed in the heart, particularly in cardiac myocytes, lung, thymus and testes.

The protein resides in the cytoplasm. It localises to the nucleus. It is found in the mitochondrion. It catalyses the reaction L-seryl-[protein] + ATP = O-phospho-L-seryl-[protein] + ADP + H(+). The catalysed reaction is L-threonyl-[protein] + ATP = O-phospho-L-threonyl-[protein] + ADP + H(+). With respect to regulation, activated by phosphorylation on threonine and tyrosine. MAP2K3/MKK3 and MAP2K6/MKK6 are both essential for the activation of MAPK12 induced by environmental stress, whereas MAP2K6/MKK6 is the major MAPK12 activator in response to TNF-alpha. Its function is as follows. Serine/threonine kinase which acts as an essential component of the MAP kinase signal transduction pathway. MAPK12 is one of the four p38 MAPKs which play an important role in the cascades of cellular responses evoked by extracellular stimuli such as pro-inflammatory cytokines or physical stress leading to direct activation of transcription factors such as ELK1 and ATF2. Accordingly, p38 MAPKs phosphorylate a broad range of proteins and it has been estimated that they may have approximately 200 to 300 substrates each. Some of the targets are downstream kinases such as MAPKAPK2, which are activated through phosphorylation and further phosphorylate additional targets. Plays a role in myoblast differentiation and also in the down-regulation of cyclin D1 in response to hypoxia in adrenal cells suggesting MAPK12 may inhibit cell proliferation while promoting differentiation. Phosphorylates DLG1. Following osmotic shock, MAPK12 in the cell nucleus increases its association with nuclear DLG1, thereby causing dissociation of DLG1-SFPQ complexes. This function is independent of its catalytic activity and could affect mRNA processing and/or gene transcription to aid cell adaptation to osmolarity changes in the environment. Regulates UV-induced checkpoint signaling and repair of UV-induced DNA damage and G2 arrest after gamma-radiation exposure. MAPK12 is involved in the regulation of SLC2A1 expression and basal glucose uptake in L6 myotubes; and negatively regulates SLC2A4 expression and contraction-mediated glucose uptake in adult skeletal muscle. C-Jun (JUN) phosphorylation is stimulated by MAPK14 and inhibited by MAPK12, leading to a distinct AP-1 regulation. MAPK12 is required for the normal kinetochore localization of PLK1, prevents chromosomal instability and supports mitotic cell viability. MAPK12-signaling is also positively regulating the expansion of transient amplifying myogenic precursor cells during muscle growth and regeneration. The sequence is that of Mitogen-activated protein kinase 12 (Mapk12) from Mus musculus (Mouse).